A 103-amino-acid polypeptide reads, in one-letter code: MTVSISSYLMVALILFCVGLYGALTKRNAVVVLLSIELMLNAVNINLVAFSKFGLYPSVTGQIFTLFTMTVAAAEVAVGLAILIALYRNKETVNVDEMNQMKR.

The next 3 helical transmembrane spans lie at 5–25 (ISSYLMVALILFCVGLYGALT), 30–50 (VVVLLSIELMLNAVNINLVAF), and 66–86 (LFTMTVAAAEVAVGLAILIAL).

This sequence belongs to the complex I subunit 4L family. As to quaternary structure, NDH-1 is composed of 14 different subunits. Subunits NuoA, H, J, K, L, M, N constitute the membrane sector of the complex.

The protein resides in the cell membrane. It catalyses the reaction a quinone + NADH + 5 H(+)(in) = a quinol + NAD(+) + 4 H(+)(out). NDH-1 shuttles electrons from NADH, via FMN and iron-sulfur (Fe-S) centers, to quinones in the respiratory chain. The immediate electron acceptor for the enzyme in this species is believed to be a menaquinone. Couples the redox reaction to proton translocation (for every two electrons transferred, four hydrogen ions are translocated across the cytoplasmic membrane), and thus conserves the redox energy in a proton gradient. In Brevibacillus brevis (strain 47 / JCM 6285 / NBRC 100599), this protein is NADH-quinone oxidoreductase subunit K.